The primary structure comprises 476 residues: Probable cytosolic Fe-S cluster assembly factor GI11683 (476 aa).

8 residues coordinate [4Fe-4S] cluster: Cys-23, Cys-68, Cys-71, Cys-74, Cys-187, Cys-243, Cys-395, and Cys-399.

Belongs to the NARF family.

Component of the cytosolic iron-sulfur (Fe/S) protein assembly machinery. Required for maturation of extramitochondrial Fe/S proteins. This chain is Probable cytosolic Fe-S cluster assembly factor GI11683, found in Drosophila mojavensis (Fruit fly).